A 158-amino-acid polypeptide reads, in one-letter code: SsrA-binding protein (158 aa).

A disordered region spans residues 131-158 (KQLHDKRQTEKERDWNKQKQRILQTNQR). Residues 132-147 (QLHDKRQTEKERDWNK) show a composition bias toward basic and acidic residues.

Belongs to the SmpB family.

It localises to the cytoplasm. Functionally, required for rescue of stalled ribosomes mediated by trans-translation. Binds to transfer-messenger RNA (tmRNA), required for stable association of tmRNA with ribosomes. tmRNA and SmpB together mimic tRNA shape, replacing the anticodon stem-loop with SmpB. tmRNA is encoded by the ssrA gene; the 2 termini fold to resemble tRNA(Ala) and it encodes a 'tag peptide', a short internal open reading frame. During trans-translation Ala-aminoacylated tmRNA acts like a tRNA, entering the A-site of stalled ribosomes, displacing the stalled mRNA. The ribosome then switches to translate the ORF on the tmRNA; the nascent peptide is terminated with the 'tag peptide' encoded by the tmRNA and targeted for degradation. The ribosome is freed to recommence translation, which seems to be the essential function of trans-translation. The sequence is that of SsrA-binding protein from Teredinibacter turnerae (strain ATCC 39867 / T7901).